Consider the following 469-residue polypeptide: 3-isopropylmalate dehydratase large subunit (469 aa).

[4Fe-4S] cluster contacts are provided by cysteine 349, cysteine 409, and cysteine 412. Residues 424–443 (QISASSSNRNFKGRQGSPSG) are disordered.

The protein belongs to the aconitase/IPM isomerase family. LeuC type 1 subfamily. In terms of assembly, heterodimer of LeuC and LeuD. [4Fe-4S] cluster serves as cofactor.

It catalyses the reaction (2R,3S)-3-isopropylmalate = (2S)-2-isopropylmalate. The protein operates within amino-acid biosynthesis; L-leucine biosynthesis; L-leucine from 3-methyl-2-oxobutanoate: step 2/4. Catalyzes the isomerization between 2-isopropylmalate and 3-isopropylmalate, via the formation of 2-isopropylmaleate. The chain is 3-isopropylmalate dehydratase large subunit from Thermosynechococcus vestitus (strain NIES-2133 / IAM M-273 / BP-1).